The sequence spans 429 residues: tRNA(Ile2) 2-agmatinylcytidine synthetase TiaS (429 aa).

A DNA-binding region (OB) is located at residues 271–343 (VRGKVIKKYW…LTLNLEKFYP (73 aa)).

It belongs to the TiaS family.

Its subcellular location is the cytoplasm. It carries out the reaction cytidine(34) in tRNA(Ile2) + agmatine + ATP + H2O = 2-agmatinylcytidine(34) in tRNA(Ile2) + AMP + 2 phosphate + 2 H(+). In terms of biological role, ATP-dependent agmatine transferase that catalyzes the formation of 2-agmatinylcytidine (agm2C) at the wobble position (C34) of tRNA(Ile2), converting the codon specificity from AUG to AUA. The chain is tRNA(Ile2) 2-agmatinylcytidine synthetase TiaS from Thermococcus sibiricus (strain DSM 12597 / MM 739).